The primary structure comprises 1131 residues: PPi-type phosphoenolpyruvate carboxykinase (1131 aa).

It belongs to the PPi-type phosphoenolpyruvate carboxykinase family. Monomer and trimer; forms heterotrimers with PEPCK2 and PEPCK3.

The catalysed reaction is oxaloacetate + diphosphate = phosphoenolpyruvate + phosphate + CO2. In terms of biological role, inorganic pyrophosphate (PPi)-dependent phosphoenolpyruvate carboxykinase, which regulates the carbon flow of the central metabolism by fixing CO(2) to phosphoenolpyruvate to produce oxaloacetate. Can also produce pyruvate and diphosphate from phosphoenolpyruvate and phosphate. The chain is PPi-type phosphoenolpyruvate carboxykinase from Propionibacterium freudenreichii subsp. freudenreichii.